A 225-amino-acid chain; its full sequence is Enolase-phosphatase E1 (225 aa).

It belongs to the HAD-like hydrolase superfamily. MasA/MtnC family. In terms of assembly, monomer. Mg(2+) is required as a cofactor.

It carries out the reaction 5-methylsulfanyl-2,3-dioxopentyl phosphate + H2O = 1,2-dihydroxy-5-(methylsulfanyl)pent-1-en-3-one + phosphate. Its pathway is amino-acid biosynthesis; L-methionine biosynthesis via salvage pathway; L-methionine from S-methyl-5-thio-alpha-D-ribose 1-phosphate: step 3/6. It participates in amino-acid biosynthesis; L-methionine biosynthesis via salvage pathway; L-methionine from S-methyl-5-thio-alpha-D-ribose 1-phosphate: step 4/6. Its function is as follows. Bifunctional enzyme that catalyzes the enolization of 2,3-diketo-5-methylthiopentyl-1-phosphate (DK-MTP-1-P) into the intermediate 2-hydroxy-3-keto-5-methylthiopentenyl-1-phosphate (HK-MTPenyl-1-P), which is then dephosphorylated to form the acireductone 1,2-dihydroxy-3-keto-5-methylthiopentene (DHK-MTPene). The protein is Enolase-phosphatase E1 of Shewanella piezotolerans (strain WP3 / JCM 13877).